We begin with the raw amino-acid sequence, 333 residues long: Large ribosomal subunit protein mL44 (333 aa).

A mitochondrion-targeting transit peptide spans 1–30; that stretch reads MASAVFRLLQQGPRRLLAPAVPTLAPPVRG. The RNase III domain occupies 86 to 228; the sequence is DLLKTAFINS…LITQMTGKEL (143 aa). One can recognise a DRBM domain in the interval 236-306; the sequence is NPMGLLVEEL…ARVALRKLYG (71 aa). The span at 311–327 shows a compositional bias: basic and acidic residues; sequence RRPWDYSKPKESPKRAE. A disordered region spans residues 311 to 333; it reads RRPWDYSKPKESPKRAEQTSVAS.

It belongs to the ribonuclease III family. Mitochondrion-specific ribosomal protein mL44 subfamily. In terms of assembly, component of the mitochondrial ribosome large subunit (39S) which comprises a 16S rRNA and about 50 distinct proteins.

The protein localises to the mitochondrion. Component of the 39S subunit of mitochondrial ribosome. May have a function in the assembly/stability of nascent mitochondrial polypeptides exiting the ribosome. This is Large ribosomal subunit protein mL44 (Mrpl44) from Mus musculus (Mouse).